A 1200-amino-acid chain; its full sequence is NACHT, LRR and PYD domains-containing protein 5 (1200 aa).

One can recognise a Pyrin domain in the interval Ser57 to Arg148. Residues Ala142–Glu152 are compositionally biased toward basic and acidic residues. The segment at Ala142–Thr232 is disordered. The segment covering Gln173–Ala182 has biased composition (polar residues). Low complexity-rich tracts occupy residues Gln192–Ala202 and Ile209–Ala221. An NACHT domain is found at Arg280 to Glu602. Residue Gly286 to Ser293 participates in ATP binding. LRR repeat units follow at residues Leu704–Leu727, Cys730–Cys753, His780–Ala803, Thr809–Ile832, Asn836–His863, Lys865–Thr892, Ser893–Asp916, Asn950–Arg973, His979–Leu1002, Asn1007–Glu1034, Ser1036–Cys1059, Ser1064–Lys1092, and Asn1121–Leu1142.

It belongs to the NLRP family. In terms of assembly, component of the subcortical maternal complex (SCMC), at least composed of NLRP5, KHDC3, OOEP, and TLE6 isoform 1. Within the complex, interacts with OOEP, KHDC3L and TLE6. The SCMC may facilitate translocation of its components between the nuclear and cytoplasmic compartments. As part of the SCMC interacts with the SCMC-associated protein ZBED3. As part of the SCMC interacts with the SCMC-associated protein CFL1/Cofilin-1. Interacts with PRKCE. Interacts with TUBB3 at cytoskeleton microtubules. In terms of processing, phosphorylated by PRKCE. Expressed in cumulus cells (at protein level). Highly abundant in oocytes and early embryos, however poorly expressed in somatic tissues such as the liver and spinal cord.

Its subcellular location is the cytoplasm. It localises to the cytoplasmic vesicle. The protein resides in the secretory vesicle. The protein localises to the cortical granule. It is found in the mitochondrion. Its subcellular location is the nucleus. It localises to the nucleolus. The protein resides in the golgi apparatus. Functionally, component of the subcortical maternal complex (SCMC), a multiprotein complex that plays a key role in early embryonic development. The SCMC complex is a structural constituent of cytoplasmic lattices, which consist in fibrous structures found in the cytoplasm of oocytes and preimplantation embryos. They are required to store maternal proteins critical for embryonic development, such as proteins that control epigenetic reprogramming of the preimplantation embryo, and prevent their degradation or activation. Required for the localization of cortical granules to the cortex of oocytes, via association with the cortical actin scaffold. Required for cortical actin clearance prior to oocyte exocytosis and prevention of polyspermy. Involved in regulating post-fertilization Ca(2+) release and endoplasmic reticulum storage (ER) storage via regulation of cellular localization. May be involved in the localization of mitochondria to the cytoplasm and perinuclear region in oocytes and early stage embryos, independent of its role in CPL formation. The chain is NACHT, LRR and PYD domains-containing protein 5 (NLRP5) from Homo sapiens (Human).